We begin with the raw amino-acid sequence, 162 residues long: Beta-carotene hydroxylase (162 aa).

A Fatty acid hydroxylase domain is found at 8 to 135 (VATVLVMELT…GRDHCVSFGF (128 aa)).

The protein belongs to the sterol desaturase family.

It carries out the reaction all-trans-beta-carotene + 4 reduced [2Fe-2S]-[ferredoxin] + 2 O2 + 4 H(+) = all-trans-zeaxanthin + 4 oxidized [2Fe-2S]-[ferredoxin] + 2 H2O. Its pathway is carotenoid biosynthesis; astaxanthin biosynthesis. Its function is as follows. Catalyzes the hydroxylation reaction from beta-carotene to zeaxanthin via beta-cryptoxanthin. The protein is Beta-carotene hydroxylase (crtZ) of Paracoccus sp. (strain PC1) (Alcaligenes sp. (strain PC1)).